The following is a 264-amino-acid chain: 2-hydroxyhexa-2,4-dienoate hydratase (264 aa).

Belongs to the hydratase/decarboxylase family.

The catalysed reaction is (2Z,4Z)-2-hydroxyhexa-2,4-dienoate + H2O = 4-hydroxy-2-oxohexanoate. Involved in the catatabolism of testosterone. Catalyzes the hydration of 2-hydroxyhexa-2,4-dienoic acid to 4-hydroxy-2-oxohexanoic acid. The protein is 2-hydroxyhexa-2,4-dienoate hydratase (tesE) of Comamonas testosteroni (Pseudomonas testosteroni).